Consider the following 562-residue polypeptide: Matrix metalloproteinase-25 (562 aa).

A signal peptide spans 1-21 (MRLRLRLLALLLLLLAPPARA). A propeptide spanning residues 22–107 (PKPSAQDVSL…VAGLVRRRRR (86 aa)) is cleaved from the precursor. The short motif at 88–95 (PRCSLPDV) is the Cysteine switch element. C90 and H233 together coordinate Zn(2+). E234 is an active-site residue. Zn(2+)-binding residues include H237 and H243. The tract at residues 278–313 (LYGKAPQTPYDKPTRKPLAPPPQPPASPTHSPSFPI) is disordered. Positions 295–304 (LAPPPQPPAS) are enriched in pro residues. 4 Hemopexin repeats span residues 314 to 363 (PDRC…WEGL), 367 to 412 (VRVV…GLPP), 413 to 461 (GEEV…EGAP), and 462 to 508 (PSPD…WLDC). C317 and C508 are disulfide-bonded. The segment at 490–526 (SIKTEPDAPQPMGPNWLDCPAPSSGPRAPRPPKATPV) is disordered. Residue A539 is the site of GPI-anchor amidated alanine attachment. Residues 540–562 (AGRWPAPIPLLLLPLLVGGVASR) constitute a propeptide, removed in mature form.

Belongs to the peptidase M10A family. The cofactor is Zn(2+). Requires Ca(2+) as cofactor. In terms of processing, the precursor is cleaved by a furin endopeptidase. Expressed predominantly in leukocytes, lung and spleen. Expressed also in colon carcinoma, astrocytoma and glioblastomas.

The protein localises to the cell membrane. It is found in the secreted. It localises to the extracellular space. Its subcellular location is the extracellular matrix. In terms of biological role, may activate progelatinase A. The protein is Matrix metalloproteinase-25 (MMP25) of Homo sapiens (Human).